A 103-amino-acid chain; its full sequence is Small ribosomal subunit protein uS10 (103 aa).

Belongs to the universal ribosomal protein uS10 family. Part of the 30S ribosomal subunit.

In terms of biological role, involved in the binding of tRNA to the ribosomes. The protein is Small ribosomal subunit protein uS10 of Vibrio campbellii (strain ATCC BAA-1116).